The sequence spans 219 residues: Phosphate-specific transport system accessory protein PhoU homolog 1 (219 aa).

It belongs to the PhoU family. In terms of assembly, homodimer.

It localises to the cytoplasm. In terms of biological role, plays a role in the regulation of phosphate uptake. This Methanothermobacter thermautotrophicus (strain ATCC 29096 / DSM 1053 / JCM 10044 / NBRC 100330 / Delta H) (Methanobacterium thermoautotrophicum) protein is Phosphate-specific transport system accessory protein PhoU homolog 1.